The chain runs to 507 residues: Alkyl hydroperoxide reductase subunit F (507 aa).

207-222 (DVLIVGGGPASGSAAI) contributes to the FAD binding site. An intrachain disulfide couples Cys-335 to Cys-338. An NAD(+)-binding site is contributed by 347–361 (DVAVIGGGNSGVEAA). FAD is bound at residue 467–477 (TNVPGIFAAGD).

The protein belongs to the class-II pyridine nucleotide-disulfide oxidoreductase family. As to quaternary structure, homodimer. Requires FAD as cofactor.

Serves to protect the cell against DNA damage by alkyl hydroperoxides. It can use either NADH or NADPH as electron donor for direct reduction of redox dyes or of alkyl hydroperoxides when combined with the AhpC protein. The chain is Alkyl hydroperoxide reductase subunit F (ahpF) from Staphylococcus aureus (strain MSSA476).